The chain runs to 67 residues: uncharacterized protein (67 aa).

Helical transmembrane passes span 6–26 and 38–58; these read GQLW…CVLM and NNII…IIII.

Its subcellular location is the membrane. This is an uncharacterized protein from Dictyostelium discoideum (Social amoeba).